Reading from the N-terminus, the 383-residue chain is Large ribosomal subunit protein uL3 (383 aa).

Belongs to the universal ribosomal protein uL3 family.

It localises to the cytoplasm. The chain is Large ribosomal subunit protein uL3 (RPL3-1) from Encephalitozoon cuniculi (strain GB-M1) (Microsporidian parasite).